Here is a 254-residue protein sequence, read N- to C-terminus: 5-oxoprolinase subunit A (254 aa).

The protein belongs to the LamB/PxpA family. As to quaternary structure, forms a complex composed of PxpA, PxpB and PxpC.

The enzyme catalyses 5-oxo-L-proline + ATP + 2 H2O = L-glutamate + ADP + phosphate + H(+). Functionally, catalyzes the cleavage of 5-oxoproline to form L-glutamate coupled to the hydrolysis of ATP to ADP and inorganic phosphate. This Rhodopseudomonas palustris (strain BisB5) protein is 5-oxoprolinase subunit A.